The chain runs to 365 residues: Putrescine carbamoyltransferase (365 aa).

Carbamoyl phosphate contacts are provided by residues 54–58 (STRTR), R105, and H132. 277–280 (HCLP) contributes to the putrescine binding site.

This sequence belongs to the aspartate/ornithine carbamoyltransferase superfamily. PTCase family. In terms of assembly, homotrimer.

It localises to the cytoplasm. It carries out the reaction carbamoyl phosphate + putrescine = N-carbamoylputrescine + phosphate + H(+). It participates in amine and polyamine biosynthesis; putrescine biosynthesis via agmatine pathway; putrescine from N-carbamoylputrescine (transferase route): step 1/1. In terms of biological role, catalyzes the phosphorolysis of N-carbamoylputrescine to form carbamoyl phosphate and putrescine. Is involved in the degradation pathway of the polyamine agmatine. This chain is Putrescine carbamoyltransferase, found in Mycoplasma capricolum subsp. capricolum (strain California kid / ATCC 27343 / NCTC 10154).